We begin with the raw amino-acid sequence, 64 residues long: DNA gyrase inhibitor YacG (64 aa).

Positions 9, 12, 28, and 32 each coordinate Zn(2+). Residues 45 to 64 form a disordered region; it reads NAIAGAPDMSDSDGWSEDQY. The segment covering 54-64 has biased composition (acidic residues); it reads SDSDGWSEDQY.

This sequence belongs to the DNA gyrase inhibitor YacG family. As to quaternary structure, interacts with GyrB. It depends on Zn(2+) as a cofactor.

In terms of biological role, inhibits all the catalytic activities of DNA gyrase by preventing its interaction with DNA. Acts by binding directly to the C-terminal domain of GyrB, which probably disrupts DNA binding by the gyrase. This chain is DNA gyrase inhibitor YacG, found in Vibrio parahaemolyticus serotype O3:K6 (strain RIMD 2210633).